Consider the following 262-residue polypeptide: Tryptophan synthase alpha chain (262 aa).

Active-site proton acceptor residues include Glu48 and Asp59.

It belongs to the TrpA family. Tetramer of two alpha and two beta chains.

It catalyses the reaction (1S,2R)-1-C-(indol-3-yl)glycerol 3-phosphate + L-serine = D-glyceraldehyde 3-phosphate + L-tryptophan + H2O. The protein operates within amino-acid biosynthesis; L-tryptophan biosynthesis; L-tryptophan from chorismate: step 5/5. The alpha subunit is responsible for the aldol cleavage of indoleglycerol phosphate to indole and glyceraldehyde 3-phosphate. This chain is Tryptophan synthase alpha chain, found in Helicobacter pylori (strain HPAG1).